The sequence spans 313 residues: Porphobilinogen deaminase (313 aa).

Cys-242 is modified (S-(dipyrrolylmethanemethyl)cysteine).

The protein belongs to the HMBS family. In terms of assembly, monomer. Dipyrromethane serves as cofactor.

The catalysed reaction is 4 porphobilinogen + H2O = hydroxymethylbilane + 4 NH4(+). Its pathway is porphyrin-containing compound metabolism; protoporphyrin-IX biosynthesis; coproporphyrinogen-III from 5-aminolevulinate: step 2/4. In terms of biological role, tetrapolymerization of the monopyrrole PBG into the hydroxymethylbilane pre-uroporphyrinogen in several discrete steps. The chain is Porphobilinogen deaminase from Pseudomonas entomophila (strain L48).